Consider the following 24-residue polypeptide: Protein YriA (24 aa).

This chain is Protein YriA, found in Escherichia coli (strain K12).